Consider the following 348-residue polypeptide: tRNA N6-adenosine threonylcarbamoyltransferase (348 aa).

Residues His116 and His120 each contribute to the Fe cation site. Substrate contacts are provided by residues 138–142 (IISGG), Asp171, Gly184, and Asn282. Residue Asp310 coordinates Fe cation.

It belongs to the KAE1 / TsaD family. It depends on Fe(2+) as a cofactor.

The protein localises to the cytoplasm. The enzyme catalyses L-threonylcarbamoyladenylate + adenosine(37) in tRNA = N(6)-L-threonylcarbamoyladenosine(37) in tRNA + AMP + H(+). In terms of biological role, required for the formation of a threonylcarbamoyl group on adenosine at position 37 (t(6)A37) in tRNAs that read codons beginning with adenine. Is involved in the transfer of the threonylcarbamoyl moiety of threonylcarbamoyl-AMP (TC-AMP) to the N6 group of A37, together with TsaE and TsaB. TsaD likely plays a direct catalytic role in this reaction. The protein is tRNA N6-adenosine threonylcarbamoyltransferase of Ehrlichia ruminantium (strain Gardel).